Consider the following 513-residue polypeptide: Maturase K (513 aa).

The protein belongs to the intron maturase 2 family. MatK subfamily.

It is found in the plastid. The protein resides in the chloroplast. Its function is as follows. Usually encoded in the trnK tRNA gene intron. Probably assists in splicing its own and other chloroplast group II introns. The sequence is that of Maturase K from Phragmites australis (Common reed).